We begin with the raw amino-acid sequence, 96 residues long: Small ribosomal subunit protein bS18 (96 aa).

The protein belongs to the bacterial ribosomal protein bS18 family. Part of the 30S ribosomal subunit. Forms a tight heterodimer with protein bS6.

In terms of biological role, binds as a heterodimer with protein bS6 to the central domain of the 16S rRNA, where it helps stabilize the platform of the 30S subunit. The protein is Small ribosomal subunit protein bS18 of Borreliella afzelii (strain PKo) (Borrelia afzelii).